The chain runs to 376 residues: Succinyl-diaminopimelate desuccinylase (376 aa).

H66 is a binding site for Zn(2+). D68 is a catalytic residue. D99 provides a ligand contact to Zn(2+). E133 acts as the Proton acceptor in catalysis. E134, E162, and H348 together coordinate Zn(2+).

This sequence belongs to the peptidase M20A family. DapE subfamily. Homodimer. Requires Zn(2+) as cofactor. The cofactor is Co(2+).

It carries out the reaction N-succinyl-(2S,6S)-2,6-diaminopimelate + H2O = (2S,6S)-2,6-diaminopimelate + succinate. It functions in the pathway amino-acid biosynthesis; L-lysine biosynthesis via DAP pathway; LL-2,6-diaminopimelate from (S)-tetrahydrodipicolinate (succinylase route): step 3/3. Functionally, catalyzes the hydrolysis of N-succinyl-L,L-diaminopimelic acid (SDAP), forming succinate and LL-2,6-diaminopimelate (DAP), an intermediate involved in the bacterial biosynthesis of lysine and meso-diaminopimelic acid, an essential component of bacterial cell walls. This Thioalkalivibrio sulfidiphilus (strain HL-EbGR7) protein is Succinyl-diaminopimelate desuccinylase.